The chain runs to 1295 residues: DNA-directed RNA polymerase subunit beta' (1295 aa).

Zn(2+) is bound by residues C66, C68, C81, and C84. Positions 562, 564, and 566 each coordinate Mg(2+). 4 residues coordinate Zn(2+): C901, C975, C982, and C985.

It belongs to the RNA polymerase beta' chain family. As to quaternary structure, the RNAP catalytic core consists of 2 alpha, 1 beta, 1 beta' and 1 omega subunit. When a sigma factor is associated with the core the holoenzyme is formed, which can initiate transcription. The cofactor is Mg(2+). It depends on Zn(2+) as a cofactor.

The catalysed reaction is RNA(n) + a ribonucleoside 5'-triphosphate = RNA(n+1) + diphosphate. DNA-dependent RNA polymerase catalyzes the transcription of DNA into RNA using the four ribonucleoside triphosphates as substrates. This Rubrobacter xylanophilus (strain DSM 9941 / JCM 11954 / NBRC 16129 / PRD-1) protein is DNA-directed RNA polymerase subunit beta'.